A 361-amino-acid chain; its full sequence is 3-dehydroquinate synthase (361 aa).

NAD(+) contacts are provided by residues 72–77, 130–131, K142, and K151; these read SGEKEK and TT. 3 residues coordinate Zn(2+): E184, H247, and H264.

The protein belongs to the sugar phosphate cyclases superfamily. Dehydroquinate synthase family. NAD(+) is required as a cofactor. The cofactor is Co(2+). Requires Zn(2+) as cofactor.

Its subcellular location is the cytoplasm. It catalyses the reaction 7-phospho-2-dehydro-3-deoxy-D-arabino-heptonate = 3-dehydroquinate + phosphate. It participates in metabolic intermediate biosynthesis; chorismate biosynthesis; chorismate from D-erythrose 4-phosphate and phosphoenolpyruvate: step 2/7. In terms of biological role, catalyzes the conversion of 3-deoxy-D-arabino-heptulosonate 7-phosphate (DAHP) to dehydroquinate (DHQ). The chain is 3-dehydroquinate synthase from Bacillus cereus (strain ATCC 14579 / DSM 31 / CCUG 7414 / JCM 2152 / NBRC 15305 / NCIMB 9373 / NCTC 2599 / NRRL B-3711).